The chain runs to 92 residues: Bombyxin A-9 (92 aa).

Positions 1-19 (MKLLLAIALMLTTVMWAST) are cleaved as a signal peptide. Gln20 is modified (pyrrolidone carboxylic acid). Intrachain disulfides connect Cys29–Cys79, Cys41–Cys92, and Cys78–Cys83. The propeptide at 50 to 71 (SDAQFASYGSAWLMPYSEGRDQ) is c peptide like.

Belongs to the insulin family. Heterodimer of a B chain and an A chain linked by two disulfide bonds.

It is found in the secreted. Functionally, brain peptide responsible for activation of prothoracic glands to produce ecdysone in insects. The chain is Bombyxin A-9 (BBXA9) from Bombyx mori (Silk moth).